The chain runs to 455 residues: Epoxide hydrolase 1 (455 aa).

Residues 1-21 form a helical; Signal-anchor for type III membrane protein membrane-spanning segment; sequence MWLEILLTSVLGFAIYWFISR. Over 22 to 455 the chain is Cytoplasmic; it reads DKEETLPLED…RKFLSVLERQ (434 aa). The active-site Nucleophile is the aspartate 226. Arginine 295 is modified (dimethylated arginine). Tyrosine 374 acts as the Proton donor in catalysis. The active-site Proton acceptor is the histidine 431.

Belongs to the peptidase S33 family. As to expression, found in liver.

Its subcellular location is the microsome membrane. It localises to the endoplasmic reticulum membrane. The catalysed reaction is cis-stilbene oxide + H2O = (1R,2R)-hydrobenzoin. The enzyme catalyses 1-(4-methoxyphenyl)-N-methyl-N-[(3-methyloxetan-3-yl)methyl]methanamine + H2O = 2-{[(4-methoxybenzyl)(methyl)amino]methyl}-2-methylpropane-1,3-diol. It carries out the reaction 8,9-epoxy-(5Z,11Z,14Z)-eicosatrienoate + H2O = 8,9-dihydroxy-(5Z,11Z,14Z)-eicosatrienoate. It catalyses the reaction 11,12-epoxy-(5Z,8Z,14Z)-eicosatrienoate + H2O = 11,12-dihydroxy-(5Z,8Z,14Z)-eicosatrienoate. The catalysed reaction is 2-(5Z,8Z,11Z,14Z-eicosatetraenoyl)-glycerol + H2O = glycerol + (5Z,8Z,11Z,14Z)-eicosatetraenoate + H(+). With respect to regulation, inhibited by 10-hydroxystearamide and methoxy-arachidonyl fluorophosphate. Biotransformation enzyme that catalyzes the hydrolysis of arene and aliphatic epoxides to less reactive and more water soluble dihydrodiols by the trans addition of water. Plays a role in the metabolism of endogenous lipids such as epoxide-containing fatty acids. Metabolizes the abundant endocannabinoid 2-arachidonoylglycerol (2-AG) to free arachidonic acid (AA) and glycerol. Binds 20(S)-hydroxycholesterol (20(S)-OHC). This Homo sapiens (Human) protein is Epoxide hydrolase 1.